Consider the following 1292-residue polypeptide: Calcium-transporting ATPase 2 (1292 aa).

A disordered region spans residues 1-105; the sequence is MPTYNDDDDS…EQASSKSSTS (105 aa). The Cytoplasmic segment spans residues 1-236; the sequence is MPTYNDDDDS…RLMLEAFKDK (236 aa). Residues 23–41 are compositionally biased toward polar residues; it reads KPSSSQFLGVPSSNYNQRE. A compositionally biased stretch (low complexity) spans 44-60; the sequence is SRSGSSTISREPSSSGT. Over residues 68–78 the composition is skewed to basic and acidic residues; it reads DSMKESYDKNK. The chain crosses the membrane as a helical span at residues 237–257; sequence VLILLSIAAVVSLALGLYQTF. Residues 258 to 273 are Vacuolar-facing; that stretch reads GQPPTLDPITGKPEPR. The helical transmembrane segment at 274-294 threads the bilayer; it reads VEWVEGVAIMAAIVIVVTVGG. Over 295-448 the chain is Cytoplasmic; the sequence is VNDWQKELQF…QLRLSRVADA (154 aa). The helical transmembrane segment at 449–469 threads the bilayer; it reads IAKLGGAASALLFIVLLIEFL. Residues 470–488 lie on the Vacuolar side of the membrane; it reads VRLKSNDSSSKNKGQEFLQ. The helical transmembrane segment at 489–509 threads the bilayer; it reads ILIVSVTLLVVAVPEGLPLAV. Residues valine 498 and glutamate 503 each contribute to the Ca(2+) site. The Cytoplasmic segment spans residues 510–938; it reads TLALAFATNR…GRTVNDAVKK (429 aa). The 4-aspartylphosphate intermediate role is filled by aspartate 545. 2 residues coordinate Mg(2+): aspartate 545 and threonine 547. ATP contacts are provided by residues threonine 547, glutamate 638, lysine 691, arginine 736, 807-809, arginine 856, and lysine 862; that span reads TGD. Aspartate 881 is a Mg(2+) binding site. Asparagine 884 lines the ATP pocket. The helical transmembrane segment at 939-959 threads the bilayer; it reads FLQFQITVNITAVFLTIISAV. Asparagine 947 serves as a coordination point for Ca(2+). The Vacuolar portion of the chain corresponds to 960–966; the sequence is ASTDQSS. Residues 967 to 987 form a helical membrane-spanning segment; sequence VLTAVQLLWVNLIMDTLAALA. 2 residues coordinate Ca(2+): asparagine 977 and aspartate 981. The Cytoplasmic portion of the chain corresponds to 988-1016; the sequence is LATDPPTPEVLKRKPEKPGASLFTFDMWK. Residues 1017–1037 form a helical membrane-spanning segment; that stretch reads MIICQSMYQLAVTLVLHFAGN. The Vacuolar portion of the chain corresponds to 1038–1084; that stretch reads SIFHYPSNTADMNTIVFNTFVWLQLFNEINNRRLDNKLNIFERINHN. The helical transmembrane segment at 1085-1105 threads the bilayer; the sequence is FLFIAIFVIVAGIQVIIVFFG. At 1106–1115 the chain is on the cytoplasmic side; that stretch reads GAAFSVKRID. The helical transmembrane segment at 1116 to 1136 threads the bilayer; the sequence is GKGWAISIVFGVISIPLGALI. The Vacuolar portion of the chain corresponds to 1137-1292; sequence RCVPNNFLRK…ALDKKSSNVH (156 aa).

The protein belongs to the cation transport ATPase (P-type) (TC 3.A.3) family.

The protein resides in the vacuole membrane. The catalysed reaction is Ca(2+)(in) + ATP + H2O = Ca(2+)(out) + ADP + phosphate + H(+). This magnesium-dependent enzyme catalyzes the hydrolysis of ATP coupled with the transport of calcium. Transports the calcium to the vacuole and participates in the control of the cytosolic free calcium. The polypeptide is Calcium-transporting ATPase 2 (pmc1) (Schizosaccharomyces pombe (strain 972 / ATCC 24843) (Fission yeast)).